Reading from the N-terminus, the 34-residue chain is Beta/mu-theraphotoxin-Pe1b (34 aa).

Intrachain disulfides connect cysteine 2-cysteine 16, cysteine 9-cysteine 21, and cysteine 15-cysteine 28.

Belongs to the neurotoxin 10 (Hwtx-1) family. 54 (ProTx-1) subfamily. In terms of tissue distribution, expressed by the venom gland.

The protein resides in the secreted. Its function is as follows. Ion channel impairing toxin that inhibits several voltage-gated sodium channels. It acts by inhibiting the inward component of the sodium current and by shifting the voltage dependence of channel activation to more depolarized potentials. Its most potent activity is on Nav1.7/SCN9A (IC(50)=167 nM), followed by Nav1.6/SCN8A (IC(50)=696 nM), and Nav1.2/SCN2A (IC(50)=3.54 uM). The protein is Beta/mu-theraphotoxin-Pe1b of Phormingochilus everetti (Malaysian purple earth tiger tarantula).